Here is a 322-residue protein sequence, read N- to C-terminus: Succinate/fumarate mitochondrial transporter (322 aa).

Solcar repeat units lie at residues 8–99 (SHPA…YRTL), 111–202 (GNTF…LKEF), and 212–303 (LPSW…VREH). 6 consecutive transmembrane segments (helical) span residues 11 to 31 (AINLMAGGTAGLFEALCCHPL), 68 to 88 (FLALYKGLGAVVIGIIPKMAI), 114 to 134 (FVAGVGAGITEAVLVVNPMEV), 177 to 193 (GVSLTAARQATNQGANF), 219 to 235 (CIGLISGAIGPFSNAPL), and 278 to 295 (GITPRVMRVAPGQAVTFT).

This sequence belongs to the mitochondrial carrier (TC 2.A.29) family.

The protein localises to the mitochondrion inner membrane. Transports cytoplasmic succinate, derived from isocitrate by the action of isocitrate lyase in the cytosol, into the mitochondrial matrix in exchange for fumarate. The polypeptide is Succinate/fumarate mitochondrial transporter (SFC1) (Saccharomyces cerevisiae (strain ATCC 204508 / S288c) (Baker's yeast)).